We begin with the raw amino-acid sequence, 613 residues long: Ribosome-associated molecular chaperone SSB1 (613 aa).

The interval 1–391 (MADGVFQGAI…ILTGQSTSDE (391 aa)) is nucleotide binding domain (NBD). ATP is bound by residues 16 to 18 (TTY), Lys-73, 205 to 207 (GGT), 271 to 278 (ERAKRTLS), and Gly-342. An inter-domain linker region spans residues 392–402 (TKDLLLLDVAP). Residues 403–613 (LSLGVGMQGD…RVVTKAMSSR (211 aa)) form a substrate binding domain (SBD) region. Positions 516–612 (SEDIEKMVNQ…KRVVTKAMSS (97 aa)) are lid domain (SBDalpha). The Nuclear export signal motif lies at 574-582 (IEAALADAL).

The protein belongs to the heat shock protein 70 family. Ssb-type Hsp70 subfamily. Binds to ribosomes. Binds close to the ribosomal tunnel exit via contacts with both ribosomal proteins and rRNA. Directly interacts with nascent polypeptides. This interaction is dependent on the ribosome-associated complex (RAC). Interacts with SSE1. Interacts with FES1.

It localises to the cytoplasm. The enzyme catalyses ATP + H2O = ADP + phosphate + H(+). Functionally, ribosome-bound, Hsp70-type chaperone that assists in the cotranslational folding of newly synthesized proteins in the cytosol. Stimulates folding by interacting with nascent chains, binding to short, largely hydrophobic sequences exposed by unfolded proteins, thereby stabilizing longer, more slowly translated, and aggregation-prone nascent polypeptides and domains that cannot fold stably until fully synthesized. The Hsp70-protein substrate interaction depends on ATP-binding and on allosteric regulation between the NBD and the SBD. The ATP-bound state is characterized by a fast exchange rate of substrate (low affinity state), while in the ADP-bound state exchange is much slower (high affinity state). During the Hsp70 cycle, the chaperone switches between the ATP-bound state (open conformation) and the ADP-bound state (closed conformation) by major conformational rearrangements involving mainly the lid domain. Ssb cooperates with a specific Hsp40/Hsp70 co-chaperone termed the ribosome-associated complex (RAC), which stimulates the ATPase activity of the ribosome-associated pool of Ssbs and switches it to the high affinity substrate binding state. Hsp110 chaperone SSE1 and FES1 act as nucleotide exchange factors that cause substrate release. In Nakaseomyces delphensis (Yeast), this protein is Ribosome-associated molecular chaperone SSB1 (SSB1).